The chain runs to 732 residues: Coagulation factor XIII A chain (732 aa).

Positions 1–26 are disordered; that stretch reads MSDTPASTFGGRRAVPPNNSNAAEVD. The residue at position 2 (serine 2) is an N-acetylserine. The propeptide at 2-38 is activation peptide; sequence SDTPASTFGGRRAVPPNNSNAAEVDLPTEELQGLVPR. Active-site residues include cysteine 315, histidine 374, and aspartate 397. Asparagine 437, aspartate 439, glutamate 486, and glutamate 491 together coordinate Ca(2+). The N-linked (GlcNAc...) asparagine glycan is linked to asparagine 614.

It belongs to the transglutaminase superfamily. Transglutaminase family. Tetramer of two A chains (F13A1) and two B (F13B) chains. The cofactor is Ca(2+). The activation peptide is released by thrombin.

It localises to the cytoplasm. It is found in the secreted. It catalyses the reaction L-glutaminyl-[protein] + L-lysyl-[protein] = [protein]-L-lysyl-N(6)-5-L-glutamyl-[protein] + NH4(+). Its function is as follows. Factor XIII is activated by thrombin and calcium ion to a transglutaminase that catalyzes the formation of gamma-glutamyl-epsilon-lysine cross-links between fibrin chains, thus stabilizing the fibrin clot. Also cross-link alpha-2-plasmin inhibitor, or fibronectin, to the alpha chains of fibrin. The chain is Coagulation factor XIII A chain (F13a1) from Mus musculus (Mouse).